A 736-amino-acid polypeptide reads, in one-letter code: Prolyl oligopeptidase dbiP (736 aa).

Catalysis depends on charge relay system residues Ser572, Asp656, and His692.

It belongs to the peptidase S9A family. Monomer.

It catalyses the reaction Hydrolysis of Pro-|-Xaa &gt;&gt; Ala-|-Xaa in oligopeptides.. It participates in mycotoxin biosynthesis. In terms of biological role, prolyl oligopeptidase; part of the gene cluster that mediates the biosynthesis of dendrothelin A, a highly methylated cyclic dodecapeptide showing slight nematodicidal activity. Excises and catalyzes the macrocyclization of the methylated core peptide of dbiMA to yield dendrothelin A. DbiP works in a two-step fashion with an initial cleavage at the N-terminus, followed by a second cleavage at the C-terminus of the core peptide. According to this mechanism, the free N-terminus of the core peptide, generated by the first cleavage, attacks the covalent intermediate of the second cleavage, which results in macrocyclization of the core peptide. The polypeptide is Prolyl oligopeptidase dbiP (Dendrothele bispora (strain CBS 962.96)).